A 140-amino-acid chain; its full sequence is Nucleoside diphosphate kinase (140 aa).

ATP is bound by residues Lys11, Phe59, Arg87, Thr93, Arg104, and Asn114. The active-site Pros-phosphohistidine intermediate is the His117.

The protein belongs to the NDK family. Homotetramer. The cofactor is Mg(2+).

It localises to the cytoplasm. It carries out the reaction a 2'-deoxyribonucleoside 5'-diphosphate + ATP = a 2'-deoxyribonucleoside 5'-triphosphate + ADP. The enzyme catalyses a ribonucleoside 5'-diphosphate + ATP = a ribonucleoside 5'-triphosphate + ADP. In terms of biological role, major role in the synthesis of nucleoside triphosphates other than ATP. The ATP gamma phosphate is transferred to the NDP beta phosphate via a ping-pong mechanism, using a phosphorylated active-site intermediate. The chain is Nucleoside diphosphate kinase from Gluconobacter oxydans (strain 621H) (Gluconobacter suboxydans).